We begin with the raw amino-acid sequence, 98 residues long: MTLTKVEIAENLTRKLELNKTEAKAMVESFFEEIRATLADGHNVKLSGFGNFELRDKASRPGRNPKTGENIPVSARRVVVFRPGQKLRARVEKSKPKG.

The segment at 54–74 (LRDKASRPGRNPKTGENIPVS) is disordered.

Belongs to the bacterial histone-like protein family. In terms of assembly, heterodimer of an alpha and a beta chain.

This protein is one of the two subunits of integration host factor, a specific DNA-binding protein that functions in genetic recombination as well as in transcriptional and translational control. This Actinobacillus succinogenes (strain ATCC 55618 / DSM 22257 / CCUG 43843 / 130Z) protein is Integration host factor subunit alpha.